Here is a 366-residue protein sequence, read N- to C-terminus: Phosphate acyltransferase (366 aa).

The disordered stretch occupies residues 334 to 366 (ESAKNKETQSKQASTKNTAPKTSETTKESQQSL). Residues 343-366 (SKQASTKNTAPKTSETTKESQQSL) are compositionally biased toward polar residues.

It belongs to the PlsX family. In terms of assembly, homodimer. Probably interacts with PlsY.

Its subcellular location is the cytoplasm. It catalyses the reaction a fatty acyl-[ACP] + phosphate = an acyl phosphate + holo-[ACP]. Its pathway is lipid metabolism; phospholipid metabolism. In terms of biological role, catalyzes the reversible formation of acyl-phosphate (acyl-PO(4)) from acyl-[acyl-carrier-protein] (acyl-ACP). This enzyme utilizes acyl-ACP as fatty acyl donor, but not acyl-CoA. This Onion yellows phytoplasma (strain OY-M) protein is Phosphate acyltransferase.